The chain runs to 354 residues: 3-dehydroquinate synthase (354 aa).

Residues 69-74 (DGEAEK), 103-107 (GVIGD), 127-128 (TS), Lys140, and Lys149 each bind NAD(+). Zn(2+) is bound by residues Glu182, His245, and His262.

This sequence belongs to the sugar phosphate cyclases superfamily. Dehydroquinate synthase family. The cofactor is Co(2+). Requires Zn(2+) as cofactor. It depends on NAD(+) as a cofactor.

The protein localises to the cytoplasm. It carries out the reaction 7-phospho-2-dehydro-3-deoxy-D-arabino-heptonate = 3-dehydroquinate + phosphate. The protein operates within metabolic intermediate biosynthesis; chorismate biosynthesis; chorismate from D-erythrose 4-phosphate and phosphoenolpyruvate: step 2/7. Its function is as follows. Catalyzes the conversion of 3-deoxy-D-arabino-heptulosonate 7-phosphate (DAHP) to dehydroquinate (DHQ). The polypeptide is 3-dehydroquinate synthase (Colwellia psychrerythraea (strain 34H / ATCC BAA-681) (Vibrio psychroerythus)).